We begin with the raw amino-acid sequence, 787 residues long: DNA ligase (787 aa).

NAD(+)-binding positions include 32 to 36 (DVEYD), 81 to 82 (SL), and Glu121. The active-site N6-AMP-lysine intermediate is the Lys123. Arg144, Glu181, Lys297, and Lys321 together coordinate NAD(+). Zn(2+)-binding residues include Cys415, Cys418, Cys445, and Cys451. Residues 703 to 787 (VEGLPLAGQT…RLTELGVAVD (85 aa)) form the BRCT domain.

This sequence belongs to the NAD-dependent DNA ligase family. LigA subfamily. Requires Mg(2+) as cofactor. It depends on Mn(2+) as a cofactor.

The catalysed reaction is NAD(+) + (deoxyribonucleotide)n-3'-hydroxyl + 5'-phospho-(deoxyribonucleotide)m = (deoxyribonucleotide)n+m + AMP + beta-nicotinamide D-nucleotide.. Functionally, DNA ligase that catalyzes the formation of phosphodiester linkages between 5'-phosphoryl and 3'-hydroxyl groups in double-stranded DNA using NAD as a coenzyme and as the energy source for the reaction. It is essential for DNA replication and repair of damaged DNA. In Pseudomonas savastanoi pv. phaseolicola (strain 1448A / Race 6) (Pseudomonas syringae pv. phaseolicola (strain 1448A / Race 6)), this protein is DNA ligase.